An 804-amino-acid chain; its full sequence is Exocyst complex component 6 (804 aa).

This sequence belongs to the SEC15 family. The exocyst complex is composed of EXOC1, EXOC2, EXOC3, EXOC4, EXOC5, EXOC6, EXOC7 and EXOC8. Interacts with CNTRL. Interacts with RAB11A in a GTP-dependent manner.

It is found in the cytoplasm. The protein resides in the perinuclear region. It localises to the cell projection. Its subcellular location is the growth cone. The protein localises to the midbody. It is found in the midbody ring. Functionally, component of the exocyst complex involved in the docking of exocytic vesicles with fusion sites on the plasma membrane. Together with RAB11A, RAB3IP, RAB8A, PARD3, PRKCI, ANXA2, CDC42 and DNMBP promotes transcytosis of PODXL to the apical membrane initiation sites (AMIS), apical surface formation and lumenogenesis. The chain is Exocyst complex component 6 (EXOC6) from Homo sapiens (Human).